Here is a 494-residue protein sequence, read N- to C-terminus: Alpha-amylase-related protein (494 aa).

The N-terminal stretch at 1-20 is a signal peptide; it reads MFKFASAVILCVVAASSTLA. The residue at position 21 (Gln-21) is a Pyrrolidone carboxylic acid. An intrachain disulfide couples Cys-48 to Cys-104. The Ca(2+) site is built by Asn-118, Gln-169, and Asp-178. Cys-157 and Cys-171 are disulfide-bonded. Arg-206 is a binding site for chloride. Catalysis depends on Asp-208, which acts as the Nucleophile. His-212 lines the Ca(2+) pocket. Glu-245 (proton donor) is an active-site residue. Asn-308 and Arg-343 together coordinate chloride. 3 disulfides stabilise this stretch: Cys-376–Cys-382, Cys-418–Cys-441, and Cys-448–Cys-460.

The protein belongs to the glycosyl hydrolase 13 family. As to quaternary structure, monomer. Requires Ca(2+) as cofactor. It depends on chloride as a cofactor.

The protein localises to the secreted. The enzyme catalyses Endohydrolysis of (1-&gt;4)-alpha-D-glucosidic linkages in polysaccharides containing three or more (1-&gt;4)-alpha-linked D-glucose units.. The polypeptide is Alpha-amylase-related protein (Amyrel) (Drosophila varians (Fruit fly)).